We begin with the raw amino-acid sequence, 1019 residues long: MGSKRGISSRHHSLSSYEIMFAALFAILVVLCAGLIAVSCLTIKESQRGAALGQSHEARATFKITSGVTYNPNLQDKLSVDFKVLAFDLQQMIDEIFLSSNLKNEYKNSRVLQFENGSIIVVFDLFFAQWVSDENVKEELIQGLEANKSSQLVTFHIDLNSVDILDKLTTTSHLATPGNVSIECLPGSSPCTDALTCIKADLFCDGEVNCPDGSDEDNKMCATVCDGRFLLTGSSGSFQATHYPKPSETSVVCQWIIRVNQGLSIKLSFDDFNTYYTDILDIYEGVGSSKILRASIWETNPGTIRIFSNQVTATFLIESDESDYVGFNATYTAFNSSELNNYEKINCNFEDGFCFWVQDLNDDNEWERIQGSTFSPFTGPNFDHTFGNASGFYISTPTGPGGRQERVGLLSLPLDPTLEPACLSFWYHMYGENVHKLSINISNDQNMEKTVFQKEGNYGDNWNYGQVTLNETVKFKVAFNAFKNKILSDIALDDISLTYGICNGSLYPEPTLVPTPPPELPTDCGGPFELWEPNTTFSSTNFPNSYPNLAFCVWILNAQKGKNIQLHFQEFDLENINDVVEIRDGEEADSLLLAVYTGPGPVKDVFSTTNRMTVLLITNDVLARGGFKANFTTGYHLGIPEPCKADHFQCKNGECVPLVNLCDGHLHCEDGSDEADCVRFFNGTTNNNGLVRFRIQSIWHTACAENWTTQISNDVCQLLGLGSGNSSKPIFPTDGGPFVKLNTAPDGHLILTPSQQCLQDSLIRLQCNHKSCGKKLAAQDITPKIVGGSNAKEGAWPWVVGLYYGGRLLCGASLVSSDWLVSAAHCVYGRNLEPSKWTAILGLHMKSNLTSPQTVPRLIDEIVINPHYNRRRKDNDIAMMHLEFKVNYTDYIQPICLPEENQVFPPGRNCSIAGWGTVVYQGTTANILQEADVPLLSNERCQQQMPEYNITENMICAGYEEGGIDSCQGDSGGPLMCQENNRWFLAGVTSFGYKCALPNRPGVYARVSRFTEWIQSFLH.

Gly2 carries the N-myristoyl glycine lipid modification. Residues 2 to 18 (GSKRGISSRHHSLSSYE) are Cytoplasmic-facing. Residues 19–47 (IMFAALFAILVVLCAGLIAVSCLTIKESQ) traverse the membrane as a helical; Signal-anchor for type II membrane protein segment. At 48–1019 (RGAALGQSHE…FTEWIQSFLH (972 aa)) the chain is on the extracellular side. Residues 54 to 169 (QSHEARATFK…NSVDILDKLT (116 aa)) form the SEA domain. Residues Asn116, Asn147, and Asn179 are each glycosylated (N-linked (GlcNAc...) asparagine). In terms of domain architecture, LDL-receptor class A 1 spans 182–223 (IECLPGSSPCTDALTCIKADLFCDGEVNCPDGSDEDNKMCAT). 4 disulfides stabilise this stretch: Cys184–Cys197, Cys191–Cys210, Cys204–Cys221, and Cys225–Cys253. A CUB 1 domain is found at 225–334 (CDGRFLLTGS…VGFNATYTAF (110 aa)). N-linked (GlcNAc...) asparagine glycans are attached at residues Asn328, Asn335, Asn388, Asn440, Asn470, Asn503, Asn534, and Asn630. The MAM domain maps to 342–504 (YEKINCNFED…ISLTYGICNG (163 aa)). A disulfide bridge connects residues Cys524 and Cys552. The CUB 2 domain occupies 524–634 (CGGPFELWEP…GGFKANFTTG (111 aa)). The LDL-receptor class A 2 domain maps to 641 to 679 (EPCKADHFQCKNGECVPLVNLCDGHLHCEDGSDEADCVR). 3 cysteine pairs are disulfide-bonded: Cys643–Cys655, Cys650–Cys668, and Cys662–Cys677. One can recognise an SRCR domain in the interval 678 to 771 (VRFFNGTTNN…LIRLQCNHKS (94 aa)). Asn682, Asn706, and Asn725 each carry an N-linked (GlcNAc...) asparagine glycan. Cystine bridges form between Cys757–Cys767, Cys772–Cys896, and Cys810–Cys826. Positions 785 to 1019 (IVGGSNAKEG…FTEWIQSFLH (235 aa)) constitute a Peptidase S1 domain. His825 functions as the Charge relay system in the catalytic mechanism. Asn848 carries an N-linked (GlcNAc...) asparagine glycan. Asp876 (charge relay system) is an active-site residue. N-linked (GlcNAc...) asparagine glycans are attached at residues Asn887, Asn909, and Asn949. Intrachain disulfides connect Cys910–Cys977, Cys941–Cys956, and Cys967–Cys995. The Charge relay system role is filled by Ser971.

It belongs to the peptidase S1 family. Heterodimer of a catalytic (light) chain and a multidomain (heavy) chain linked by a disulfide bond. Post-translationally, the chains are derived from a single precursor that is cleaved by a trypsin-like protease. As to expression, intestinal brush border.

Its subcellular location is the membrane. It catalyses the reaction Activation of trypsinogen by selective cleavage of 6-Lys-|-Ile-7 bond.. In terms of biological role, responsible for initiating activation of pancreatic proteolytic proenzymes (trypsin, chymotrypsin and carboxypeptidase A). It catalyzes the conversion of trypsinogen to trypsin which in turn activates other proenzymes including chymotrypsinogen, procarboxypeptidases, and proelastases. This is Enteropeptidase (TMPRSS15) from Homo sapiens (Human).